The primary structure comprises 370 residues: Pyruvate dehydrogenase E1 component subunit alpha (370 aa).

In terms of assembly, heterodimer of an alpha and a beta chain. The cofactor is thiamine diphosphate.

The enzyme catalyses N(6)-[(R)-lipoyl]-L-lysyl-[protein] + pyruvate + H(+) = N(6)-[(R)-S(8)-acetyldihydrolipoyl]-L-lysyl-[protein] + CO2. Functionally, the pyruvate dehydrogenase complex catalyzes the overall conversion of pyruvate to acetyl-CoA and CO(2). It contains multiple copies of three enzymatic components: pyruvate dehydrogenase (E1), dihydrolipoamide acetyltransferase (E2) and lipoamide dehydrogenase (E3). This chain is Pyruvate dehydrogenase E1 component subunit alpha (pdhA), found in Staphylococcus aureus (strain MRSA252).